A 352-amino-acid chain; its full sequence is Speedy protein E18 (352 aa).

Basic residues predominate over residues 1 to 12 (MDRTKTRFRKRG). Positions 1–90 (MDRTKTRFRK…EPEKELAPEP (90 aa)) are disordered. The segment covering 16-39 (GKITTSRQPHPQNEQSLQRSTSGY) has biased composition (polar residues). Residues 76-90 (DESEEEPEKELAPEP) are compositionally biased toward acidic residues.

The protein belongs to the Speedy/Ringo family.

This Homo sapiens (Human) protein is Speedy protein E18.